The following is a 591-amino-acid chain: Chaperone protein DnaK (591 aa).

A Phosphothreonine; by autocatalysis modification is found at Thr-175. A compositionally biased stretch (low complexity) spans 568–577; the sequence is AQAAEFANKQ. A disordered region spans residues 568-591; sequence AQAAEFANKQNESDPNNNSSEQNN. Over residues 580-591 the composition is skewed to polar residues; it reads SDPNNNSSEQNN.

This sequence belongs to the heat shock protein 70 family.

Its function is as follows. Acts as a chaperone. This Mycoplasma mycoides subsp. mycoides SC (strain CCUG 32753 / NCTC 10114 / PG1) protein is Chaperone protein DnaK.